A 440-amino-acid chain; its full sequence is ATP-dependent protease ATPase subunit HslU (440 aa).

ATP-binding positions include Ile18, 60 to 65, Asp252, Glu318, and Arg390; that span reads GVGKTE.

It belongs to the ClpX chaperone family. HslU subfamily. In terms of assembly, a double ring-shaped homohexamer of HslV is capped on each side by a ring-shaped HslU homohexamer. The assembly of the HslU/HslV complex is dependent on binding of ATP.

The protein localises to the cytoplasm. ATPase subunit of a proteasome-like degradation complex; this subunit has chaperone activity. The binding of ATP and its subsequent hydrolysis by HslU are essential for unfolding of protein substrates subsequently hydrolyzed by HslV. HslU recognizes the N-terminal part of its protein substrates and unfolds these before they are guided to HslV for hydrolysis. The polypeptide is ATP-dependent protease ATPase subunit HslU (Acidithiobacillus ferrooxidans (strain ATCC 23270 / DSM 14882 / CIP 104768 / NCIMB 8455) (Ferrobacillus ferrooxidans (strain ATCC 23270))).